The chain runs to 942 residues: Protein inturned (942 aa).

Disordered stretches follow at residues 1–56 (MAGL…PEWL) and 128–156 (LPRRHHKKSSSNNGPVSILKHQSSQKTGV). Over residues 22–32 (SQEEEEEEGDS) the composition is skewed to acidic residues. Positions 33 to 48 (DAGASSLGSYSSASSD) are enriched in low complexity. Residues 137–156 (SSNNGPVSILKHQSSQKTGV) show a composition bias toward polar residues. The 83-residue stretch at 185–267 (LLEVLVGIIH…PMQVKLTFEN (83 aa)) folds into the PDZ domain. 2 positions are modified to phosphoserine: S674 and S678. Residues 707–751 (KARKPSPSRIGGGREPTEGEESAGLSPHATPDAVRKQRESEGSDD) are disordered.

This sequence belongs to the inturned family. In terms of assembly, component of the CPLANE (ciliogenesis and planar polarity effectors) complex, composed of INTU, FUZ and WDPCP. Interacts with CPLANE1. Interacts with NPHP4 and DAAM1; INTU is mediating the interaction between NPHP4 and DAAM1. Widely expressed in E8.5 and E9.5 wild type embryos. Present in various adult organs (at protein level).

It is found in the cytoplasm. The protein localises to the cell surface. It localises to the cytoskeleton. The protein resides in the cilium basal body. Its subcellular location is the microtubule organizing center. It is found in the centrosome. The protein localises to the centriole. In terms of biological role, plays a key role in ciliogenesis and embryonic development. Regulator of cilia formation by controlling the organization of the apical actin cytoskeleton and the positioning of the basal bodies at the apical cell surface, which in turn is essential for the normal orientation of elongating ciliary microtubules. Plays a key role in definition of cell polarity via its role in ciliogenesis but not via conversion extension. Has an indirect effect on hedgehog signaling. Proposed to function as core component of the CPLANE (ciliogenesis and planar polarity effectors) complex involved in the recruitment of peripheral IFT-A proteins to basal bodies. Required for recruitment of CPLANE2 to the mother centriole. Binds phosphatidylinositol 3-phosphate with highest affinity, followed by phosphatidylinositol 4-phosphate and phosphatidylinositol 5-phosphate. This Mus musculus (Mouse) protein is Protein inturned (Intu).